The sequence spans 278 residues: Outer spore wall protein 1 (278 aa).

The protein localises to the spore wall. Functionally, may be involved in a late step of spore wall assembly. The polypeptide is Outer spore wall protein 1 (OSW1) (Saccharomyces cerevisiae (strain ATCC 204508 / S288c) (Baker's yeast)).